The sequence spans 1942 residues: Myosin-2 (1942 aa).

The 50-residue stretch at Asp33–Pro82 folds into the Myosin N-terminal SH3-like domain. Thr64 and Thr69 each carry phosphothreonine. The region spanning Asp86–Asp785 is the Myosin motor domain. Gly179–Thr186 is an ATP binding site. Phosphotyrosine is present on Tyr389. Thr419 bears the Phosphothreonine mark. At Ser625 the chain carries Phosphoserine. Positions Leu662–Glu684 are actin-binding. His760 bears the Pros-methylhistidine mark. The region spanning Leu788–Ser817 is the IQ domain. A coiled-coil region spans residues Ser849–Lys1930. Ser1095 and Ser1099 each carry phosphoserine. The segment at Glu1130–Glu1175 is disordered. A compositionally biased stretch (basic and acidic residues) spans Ala1131 to Glu1159. Phosphoserine is present on residues Ser1165 and Ser1240. Residue Thr1244 is modified to Phosphothreonine. Position 1246 is a phosphoserine (Ser1246). A Phosphothreonine modification is found at Thr1258. Ser1264 bears the Phosphoserine mark. Thr1289 carries the phosphothreonine modification. Residues Ser1291, Ser1295, Ser1306, and Ser1309 each carry the phosphoserine modification. Residue Tyr1467 is modified to Phosphotyrosine. At Thr1470 the chain carries Phosphothreonine. At Ser1477 the chain carries Phosphoserine. A Phosphotyrosine modification is found at Tyr1495. Position 1498 is a phosphoserine (Ser1498). Position 1504 is a phosphothreonine (Thr1504). Position 1517 is a phosphoserine (Ser1517). The residue at position 1520 (Thr1520) is a Phosphothreonine. 6 positions are modified to phosphoserine: Ser1557, Ser1577, Ser1603, Ser1606, Ser1717, and Ser1729. Phosphothreonine occurs at positions 1733 and 1739. Ser1742 carries the phosphoserine modification.

The protein belongs to the TRAFAC class myosin-kinesin ATPase superfamily. Myosin family. As to quaternary structure, muscle myosin is a hexameric protein that consists of 2 heavy chain subunits (MHC), 2 alkali light chain subunits (MLC) and 2 regulatory light chain subunits (MLC-2). Interacts with GCSAM. Expressed in type 2a myofibers in the tibialis anterior and soleus muscles (at protein level).

Its subcellular location is the cytoplasm. The protein resides in the myofibril. In terms of biological role, myosins are actin-based motor molecules with ATPase activity essential for muscle contraction. This is Myosin-2 from Mus musculus (Mouse).